A 260-amino-acid polypeptide reads, in one-letter code: Ribosomal RNA small subunit methyltransferase A (260 aa).

Positions 23, 48, 69, 94, and 110 each coordinate S-adenosyl-L-methionine.

Belongs to the class I-like SAM-binding methyltransferase superfamily. rRNA adenine N(6)-methyltransferase family. RsmA subfamily.

Its subcellular location is the cytoplasm. The catalysed reaction is adenosine(1518)/adenosine(1519) in 16S rRNA + 4 S-adenosyl-L-methionine = N(6)-dimethyladenosine(1518)/N(6)-dimethyladenosine(1519) in 16S rRNA + 4 S-adenosyl-L-homocysteine + 4 H(+). Functionally, specifically dimethylates two adjacent adenosines (A1518 and A1519) in the loop of a conserved hairpin near the 3'-end of 16S rRNA in the 30S particle. May play a critical role in biogenesis of 30S subunits. The sequence is that of Ribosomal RNA small subunit methyltransferase A from Thermotoga neapolitana (strain ATCC 49049 / DSM 4359 / NBRC 107923 / NS-E).